Here is a 240-residue protein sequence, read N- to C-terminus: Phosphoribosylaminoimidazole-succinocarboxamide synthase (240 aa).

Belongs to the SAICAR synthetase family.

The catalysed reaction is 5-amino-1-(5-phospho-D-ribosyl)imidazole-4-carboxylate + L-aspartate + ATP = (2S)-2-[5-amino-1-(5-phospho-beta-D-ribosyl)imidazole-4-carboxamido]succinate + ADP + phosphate + 2 H(+). It participates in purine metabolism; IMP biosynthesis via de novo pathway; 5-amino-1-(5-phospho-D-ribosyl)imidazole-4-carboxamide from 5-amino-1-(5-phospho-D-ribosyl)imidazole-4-carboxylate: step 1/2. This Anoxybacillus flavithermus (strain DSM 21510 / WK1) protein is Phosphoribosylaminoimidazole-succinocarboxamide synthase.